Here is a 336-residue protein sequence, read N- to C-terminus: Heme A synthase (336 aa).

Helical transmembrane passes span 5-25, 92-112, 117-137, 153-173, and 191-211; these read LTRWLLTCCIMVVAMIIVGGI, GRATGLIYILPLIYFYFKGII, ILSYIIVLLLFCVQGFMGWYM, LAFHLIIAVIIYHLLFYKLVK, and LIFSVAAIAMIYVQIFLGALV. Histidine 255 lines the heme pocket. Transmembrane regions (helical) follow at residues 257-277, 284-304, and 307-327; these read LGAYSLSIIVIALIISLLKVK, VAFYLSIALLIQLSTGVITLL, and VPIIAASMHQFFAIVLLSVVI. Histidine 315 is a binding site for heme.

The protein belongs to the COX15/CtaA family. Type 2 subfamily. In terms of assembly, interacts with CtaB. Heme b serves as cofactor.

It is found in the cell membrane. It catalyses the reaction Fe(II)-heme o + 2 A + H2O = Fe(II)-heme a + 2 AH2. It functions in the pathway porphyrin-containing compound metabolism; heme A biosynthesis; heme A from heme O: step 1/1. Functionally, catalyzes the conversion of heme O to heme A by two successive hydroxylations of the methyl group at C8. The first hydroxylation forms heme I, the second hydroxylation results in an unstable dihydroxymethyl group, which spontaneously dehydrates, resulting in the formyl group of heme A. The protein is Heme A synthase of Rickettsia bellii (strain OSU 85-389).